Here is a 144-residue protein sequence, read N- to C-terminus: Large ribosomal subunit protein uL16 (144 aa).

It belongs to the universal ribosomal protein uL16 family. As to quaternary structure, part of the 50S ribosomal subunit.

Its function is as follows. Binds 23S rRNA and is also seen to make contacts with the A and possibly P site tRNAs. This chain is Large ribosomal subunit protein uL16, found in Levilactobacillus brevis (strain ATCC 367 / BCRC 12310 / CIP 105137 / JCM 1170 / LMG 11437 / NCIMB 947 / NCTC 947) (Lactobacillus brevis).